The chain runs to 913 residues: Translation initiation factor IF-2 (913 aa).

A disordered region spans residues 1–322; that stretch reads MTDNNDDKTL…QEKFRRSQMQ (322 aa). Positions 60-113 are enriched in low complexity; the sequence is VQPVVAAPKPAAPAPVAARPQAPQPRIHQPGGQQQRPGSSQSQQRSGSSAPQQR. The span at 131-180 shows a compositional bias: basic and acidic residues; that stretch reads MEARRRALMEAQARDVVEAKQRAEDEARRKVEEEQRIAAEKMEAANRAAE. Low complexity-rich tracts occupy residues 181–195, 203–238, and 261–277; these read EAAA…PAAE, ERPA…AAAP, and PARG…PAAR. In terms of domain architecture, tr-type G spans 411–578; that stretch reads SRPPVVTIMG…AILLQAEILD (168 aa). Residues 420 to 427 form a G1 region; the sequence is GHVDHGKT. 420–427 lines the GTP pocket; that stretch reads GHVDHGKT. The interval 445-449 is G2; that stretch reads GITQH. Residues 466-469 are G3; that stretch reads DTPG. Residues 466-470 and 520-523 each bind GTP; these read DTPGH and NKID. Residues 520–523 form a G4 region; the sequence is NKID. A G5 region spans residues 556–558; the sequence is SAK.

Belongs to the TRAFAC class translation factor GTPase superfamily. Classic translation factor GTPase family. IF-2 subfamily.

The protein localises to the cytoplasm. In terms of biological role, one of the essential components for the initiation of protein synthesis. Protects formylmethionyl-tRNA from spontaneous hydrolysis and promotes its binding to the 30S ribosomal subunits. Also involved in the hydrolysis of GTP during the formation of the 70S ribosomal complex. This is Translation initiation factor IF-2 from Agrobacterium fabrum (strain C58 / ATCC 33970) (Agrobacterium tumefaciens (strain C58)).